The following is a 101-amino-acid chain: Conantokin-L (101 aa).

Residues 1 to 21 form the signal peptide; that stretch reads MQLYTYLYLLVPLVTFHLILG. Residues 22-80 constitute a propeptide that is removed on maturation; that stretch reads TGTLDHGGALTERRSTDAIALKPEPVLLQKSSARSTDDNGNDRLTQMKRILKKRGNKAR. Residues E83, E84, E91, and E95 each carry the 4-carboxyglutamate modification. Residues E91 and E95 each contribute to the a divalent metal cation site. N99 is modified (asparagine amide).

This sequence belongs to the conotoxin B superfamily. Requires Ca(2+) as cofactor. It depends on Mg(2+) as a cofactor. Expressed by the venom duct.

The protein localises to the secreted. In terms of biological role, conantokins inhibit N-methyl-D-aspartate (NMDA) receptors. This toxin is far less potent as an anticonvulsant compound than conantokin-R. It induces sleep-like symptoms in mice. In Conus lynceus (Lynceus cone), this protein is Conantokin-L.